The primary structure comprises 284 residues: D-tagatose-1,6-bisphosphate aldolase subunit GatY (284 aa).

Aspartate 82 functions as the Proton donor in the catalytic mechanism. 2 residues coordinate Zn(2+): histidine 83 and histidine 180. Glycine 181 is a dihydroxyacetone phosphate binding site. A Zn(2+)-binding site is contributed by histidine 208. Residues 209-211 and 230-233 contribute to the dihydroxyacetone phosphate site; these read GAS and NVAT.

The protein belongs to the class II fructose-bisphosphate aldolase family. TagBP aldolase GatY subfamily. Forms a complex with GatZ. Requires Zn(2+) as cofactor.

The catalysed reaction is D-tagatofuranose 1,6-bisphosphate = D-glyceraldehyde 3-phosphate + dihydroxyacetone phosphate. The protein operates within carbohydrate metabolism; D-tagatose 6-phosphate degradation; D-glyceraldehyde 3-phosphate and glycerone phosphate from D-tagatose 6-phosphate: step 2/2. Its function is as follows. Catalytic subunit of the tagatose-1,6-bisphosphate aldolase GatYZ, which catalyzes the reversible aldol condensation of dihydroxyacetone phosphate (DHAP or glycerone-phosphate) with glyceraldehyde 3-phosphate (G3P) to produce tagatose 1,6-bisphosphate (TBP). Requires GatZ subunit for full activity and stability. Is involved in the catabolism of galactitol. This is D-tagatose-1,6-bisphosphate aldolase subunit GatY from Salmonella typhi.